A 165-amino-acid chain; its full sequence is 3-hydroxyacyl-[acyl-carrier-protein] dehydratase FabZ (165 aa).

The active site involves H68.

It belongs to the thioester dehydratase family. FabZ subfamily.

It is found in the cytoplasm. The enzyme catalyses a (3R)-hydroxyacyl-[ACP] = a (2E)-enoyl-[ACP] + H2O. Involved in unsaturated fatty acids biosynthesis. Catalyzes the dehydration of short chain beta-hydroxyacyl-ACPs and long chain saturated and unsaturated beta-hydroxyacyl-ACPs. This chain is 3-hydroxyacyl-[acyl-carrier-protein] dehydratase FabZ, found in Methylobacterium sp. (strain 4-46).